A 103-amino-acid polypeptide reads, in one-letter code: Large ribosomal subunit protein eL30 (103 aa).

This sequence belongs to the eukaryotic ribosomal protein eL30 family.

This Methanosarcina mazei (strain ATCC BAA-159 / DSM 3647 / Goe1 / Go1 / JCM 11833 / OCM 88) (Methanosarcina frisia) protein is Large ribosomal subunit protein eL30.